The sequence spans 457 residues: uncharacterized protein (457 aa).

This is an uncharacterized protein from Acanthamoeba polyphaga mimivirus (APMV).